The sequence spans 376 residues: ATP phosphoribosyltransferase regulatory subunit (376 aa).

The protein belongs to the class-II aminoacyl-tRNA synthetase family. HisZ subfamily. In terms of assembly, heteromultimer composed of HisG and HisZ subunits.

Its subcellular location is the cytoplasm. It functions in the pathway amino-acid biosynthesis; L-histidine biosynthesis; L-histidine from 5-phospho-alpha-D-ribose 1-diphosphate: step 1/9. Required for the first step of histidine biosynthesis. May allow the feedback regulation of ATP phosphoribosyltransferase activity by histidine. In Brucella anthropi (strain ATCC 49188 / DSM 6882 / CCUG 24695 / JCM 21032 / LMG 3331 / NBRC 15819 / NCTC 12168 / Alc 37) (Ochrobactrum anthropi), this protein is ATP phosphoribosyltransferase regulatory subunit.